The primary structure comprises 195 residues: Glycerol-3-phosphate acyltransferase (195 aa).

Helical transmembrane passes span 2–22, 54–74, 80–100, 107–127, 132–152, and 155–175; these read IFFSILITIFAYFLGSISSAI, IAISVILFDILKGAIPMWLGY, PIFLGATAVFSCLGHMYPIFF, GVATAFGVLTTIDLHLSIVMI, LTVLSFGYSSLGAIVTAFIIP, and AWHFQSQYLLPTIIISSLVVI.

This sequence belongs to the PlsY family. In terms of assembly, probably interacts with PlsX.

Its subcellular location is the cell inner membrane. The enzyme catalyses an acyl phosphate + sn-glycerol 3-phosphate = a 1-acyl-sn-glycero-3-phosphate + phosphate. Its pathway is lipid metabolism; phospholipid metabolism. Functionally, catalyzes the transfer of an acyl group from acyl-phosphate (acyl-PO(4)) to glycerol-3-phosphate (G3P) to form lysophosphatidic acid (LPA). This enzyme utilizes acyl-phosphate as fatty acyl donor, but not acyl-CoA or acyl-ACP. This chain is Glycerol-3-phosphate acyltransferase, found in Blochmanniella pennsylvanica (strain BPEN).